A 378-amino-acid polypeptide reads, in one-letter code: 3,6-diketocamphane 1,6-monooxygenase (378 aa).

FMN is bound by residues histidine 10, serine 44, methionine 76, and 201 to 209 (TGFSYNSPS).

This sequence belongs to the bacterial luciferase oxidoreductase family. As to quaternary structure, homodimer. Likely forms a loose transient complex with a P.putida flavin reductase that provides the required FMNH(2) to the enzyme.

It carries out the reaction (1S,4S)-bornane-2,5-dione + FMNH2 + O2 = (1S,4S)-5-oxo-1,2-campholide + FMN + H2O + H(+). Functionally, involved in the degradation and assimilation of (-)-camphor, which allows P.putida strain NCIMB 10007 to grow on this enantiomer of camphor as the sole carbon source. Catalyzes the FMNH(2)-dependent lactonization of 3,6-diketocamphane via a Baeyer-Villiger oxidation to produce the unstable lactone 5-oxo-1,2-campholide with (S,S) configuration, that presumably undergoes spontaneous hydrolysis to form 2-oxo-Delta(3)-4,5,5-trimethylcyclopentenylacetate. Is also able to convert (-)-camphor to the corresponding lactone in vitro. Shows no conversion of (+)-camphor, (+)-fenchone, (-)-fenchone, and (+)-nopinone. Acts on other bicyclic ketones but very poorly on a few 2- and 4-substituted monocyclic ketones. This is 3,6-diketocamphane 1,6-monooxygenase from Pseudomonas putida (Arthrobacter siderocapsulatus).